Reading from the N-terminus, the 393-residue chain is MTRIGTPLSPTATRVLLCGCGELGKEVVIELQRLGVEVIAVDRYANAPAMQVAHRSHVINMLDGAALRAVIEAEKPHFIVPEIEAIATATLVELEAEGFTVIPTARATSLTMNREGIRRLAAEELDLPTSPYHFADTFEDYSRAVQDLGFPCVVKPVMSSSGKGQSLLRSVDDVQKAWDYAQEGGRAGKGRVIIEGFIDFDYEITLLTVRHVGGTTFCAPVGHRQEKGDYQESWQPQAMSPKALAESERVAKAVTEALGGRGLFGVELFIKGDQVWFSEVSPRPHDTGLVTLISQDLSQFALHARAILGLPIPLIRQFGPSASAVILVEGTSTQTAFANLGAALSEPDTALRLFGKPEVNGQRRMGVALARDESIEAARAKATRAAQAVVVEL.

N(1)-(5-phospho-beta-D-ribosyl)glycinamide is bound by residues 22–23 (EL) and E82. ATP-binding positions include R114, K155, 160–165 (SSGKGQ), 195–198 (EGFI), and E203. One can recognise an ATP-grasp domain in the interval 119–308 (RLAAEELDLP…QFALHARAIL (190 aa)). Mg(2+)-binding residues include E267 and E279. Residues D286, K356, and 363-364 (RR) contribute to the N(1)-(5-phospho-beta-D-ribosyl)glycinamide site.

This sequence belongs to the PurK/PurT family. As to quaternary structure, homodimer.

It carries out the reaction N(1)-(5-phospho-beta-D-ribosyl)glycinamide + formate + ATP = N(2)-formyl-N(1)-(5-phospho-beta-D-ribosyl)glycinamide + ADP + phosphate + H(+). It participates in purine metabolism; IMP biosynthesis via de novo pathway; N(2)-formyl-N(1)-(5-phospho-D-ribosyl)glycinamide from N(1)-(5-phospho-D-ribosyl)glycinamide (formate route): step 1/1. Involved in the de novo purine biosynthesis. Catalyzes the transfer of formate to 5-phospho-ribosyl-glycinamide (GAR), producing 5-phospho-ribosyl-N-formylglycinamide (FGAR). Formate is provided by PurU via hydrolysis of 10-formyl-tetrahydrofolate. The chain is Formate-dependent phosphoribosylglycinamide formyltransferase from Pseudomonas fluorescens (strain ATCC BAA-477 / NRRL B-23932 / Pf-5).